We begin with the raw amino-acid sequence, 205 residues long: dITP/XTP pyrophosphatase (205 aa).

Residue 7 to 12 (SNNRGK) coordinates substrate. Glutamate 39 and aspartate 68 together coordinate Mg(2+). Aspartate 68 (proton acceptor) is an active-site residue. Substrate-binding positions include alanine 69, 154–157 (FGFD), lysine 177, and 182–183 (HR).

The protein belongs to the HAM1 NTPase family. As to quaternary structure, homodimer. Requires Mg(2+) as cofactor.

The catalysed reaction is XTP + H2O = XMP + diphosphate + H(+). It catalyses the reaction dITP + H2O = dIMP + diphosphate + H(+). It carries out the reaction ITP + H2O = IMP + diphosphate + H(+). Its function is as follows. Pyrophosphatase that catalyzes the hydrolysis of nucleoside triphosphates to their monophosphate derivatives, with a high preference for the non-canonical purine nucleotides XTP (xanthosine triphosphate), dITP (deoxyinosine triphosphate) and ITP. Seems to function as a house-cleaning enzyme that removes non-canonical purine nucleotides from the nucleotide pool, thus preventing their incorporation into DNA/RNA and avoiding chromosomal lesions. The protein is dITP/XTP pyrophosphatase of Acidovorax ebreus (strain TPSY) (Diaphorobacter sp. (strain TPSY)).